The primary structure comprises 396 residues: E3 ubiquitin-protein transferase MAEA (396 aa).

Residues 1-124 (MAVQESAAQL…AAASVWKRKR (124 aa)) form an extracellular and involved in cell to cell contact region. Position 28 is a phosphothreonine (Thr-28). The region spanning 121–153 (KRKRMDRMMVEHLLRCGYYNTAVKLARQSGIED) is the LisH domain. The CTLH domain occupies 159-216 (MFLTAKEVEESLERRETATCLAWCHDNKSRLRKMKSCLEFSLRIQEFIELIRQNKRLD). The segment at 314–381 (CPVCSRSLNK…QDDKVVCPRT (68 aa)) adopts an RING-Gid-type zinc-finger fold.

As to quaternary structure, identified in the CTLH complex that contains GID4, RANBP9 and/or RANBP10, MKLN1, MAEA, RMND5A (or alternatively its paralog RMND5B), GID8, ARMC8, WDR26 and YPEL5. Within this complex, MAEA, RMND5A (or alternatively its paralog RMND5B), GID8, WDR26, and RANBP9 and/or RANBP10 form the catalytic core, while GID4, MKLN1, ARMC8 and YPEL5 have ancillary roles. Interacts with F-actin. Post-translationally, autoubiquitinated as component of the CTLH E3 ubiquitin-protein ligase complex (in vitro).

It localises to the cytoplasm. The protein localises to the nucleus. Its subcellular location is the nucleoplasm. It is found in the nucleus matrix. The protein resides in the cell membrane. It localises to the cytoskeleton. The enzyme catalyses S-ubiquitinyl-[E2 ubiquitin-conjugating enzyme]-L-cysteine + [acceptor protein]-L-lysine = [E2 ubiquitin-conjugating enzyme]-L-cysteine + N(6)-ubiquitinyl-[acceptor protein]-L-lysine.. Functionally, core component of the CTLH E3 ubiquitin-protein ligase complex that selectively accepts ubiquitin from UBE2H and mediates ubiquitination and subsequent proteasomal degradation of the transcription factor HBP1. MAEA and RMND5A are both required for catalytic activity of the CTLH E3 ubiquitin-protein ligase complex. MAEA is required for normal cell proliferation. The CTLH E3 ubiquitin-protein ligase complex is not required for the degradation of enzymes involved in gluconeogenesis, such as FBP1. Plays a role in erythroblast enucleation during erythrocyte maturation and in the development of mature macrophages. Mediates the attachment of erythroid cell to mature macrophages; this MAEA-mediated contact inhibits erythroid cell apoptosis. Participates in erythroblastic island formation, which is the functional unit of definitive erythropoiesis. Associates with F-actin to regulate actin distribution in erythroblasts and macrophages. May contribute to nuclear architecture and cells division events. This is E3 ubiquitin-protein transferase MAEA (MAEA) from Pongo abelii (Sumatran orangutan).